A 226-amino-acid chain; its full sequence is CD9 antigen (226 aa).

Residues 1-12 are Cytoplasmic-facing; it reads MPVKGGTKCIKY. Cys9 carries S-palmitoyl cysteine lipidation. A helical transmembrane segment spans residues 13–33; it reads LLFGFNFIFWLAGIAVLAVGL. At 34-53 the chain is on the extracellular side; that stretch reads WLRFDSQTKSIFEQDSQPSS. Residues 54–74 form a helical membrane-spanning segment; sequence FYTGVYILIGAGALMMLVGFL. Over 75-85 the chain is Cytoplasmic; it reads GCCGAVQESQC. 3 S-palmitoyl cysteine lipidation sites follow: Cys76, Cys77, and Cys85. The chain crosses the membrane as a helical span at residues 86–109; sequence MLGLFFGFLLVIFAIEIAAAIWGY. At 110–193 the chain is on the extracellular side; it reads SHKDEVIQEV…KEVFHNKFHI (84 aa). Disulfide bonds link Cys150/Cys179 and Cys151/Cys165. Residues 194-219 traverse the membrane as a helical segment; it reads IGAVGIGIAVVMIFGMIFSMILCCAI. 2 S-palmitoyl cysteine lipidation sites follow: Cys216 and Cys217. Over 220 to 226 the chain is Cytoplasmic; sequence RRSREMV.

This sequence belongs to the tetraspanin (TM4SF) family. As to quaternary structure, forms both disulfide-linked homodimers and higher homooligomers as well as heterooligomers with other members of the tetraspanin family. Interacts (via the second extracellular domain) with integrin ITGAV:ITGB3. Interacts with integrin ITGA6:ITGB1; interaction takes place in oocytes and is involved in sperm-egg fusion. Part of integrin-tetraspanin complexes composed of CD81, beta-1 and beta-2 integrins in the membrane of monocyte/macrophages. Interacts with CD63; identified in a complex with CD63 and ITGB3. Associates with CR2/CD21 and with PTGFRN/CD9P1. Part of a complex composed of CD9, CD81, PTGFRN and IGSF8. Interacts directly with IGSF8. Interacts with PDPN; this interaction is homophilic and attenuates platelet aggregation and pulmonary metastasis induced by PDPN. Interacts (on T cell side) with CD81 at immunological synapses between antigen-presenting cells and T cells. Post-translationally, palmitoylated at a low, basal level in unstimulated platelets. The level of palmitoylation increases when platelets are activated by thrombin (in vitro). The protein exists in three forms with molecular masses between 22 and 27 kDa, and is known to carry covalently linked fatty acids. Palmitoylation by ZDHHC2 regulates CD9 expression, association with other tetraspanin family proteins and function in cell adhesion.

The protein resides in the cell membrane. It localises to the membrane. The protein localises to the secreted. It is found in the extracellular exosome. In terms of biological role, integral membrane protein associated with integrins, which regulates different processes, such as sperm-egg fusion, platelet activation and aggregation, and cell adhesion. Present at the cell surface of oocytes and plays a key role in sperm-egg fusion, possibly by organizing multiprotein complexes and the morphology of the membrane required for the fusion. In myoblasts, associates with CD81 and PTGFRN and inhibits myotube fusion during muscle regeneration. In macrophages, associates with CD81 and beta-1 and beta-2 integrins, and prevents macrophage fusion into multinucleated giant cells specialized in ingesting complement-opsonized large particles. Also prevents the fusion between mononuclear cell progenitors into osteoclasts in charge of bone resorption. Acts as a receptor for PSG17. Involved in platelet activation and aggregation. Regulates paranodal junction formation. Involved in cell adhesion, cell motility and tumor metastasis. This chain is CD9 antigen, found in Felis catus (Cat).